The sequence spans 377 residues: MSRGIIIIGSGFAARQLVKNIRKQDAHVPLTLIAADSMDEYNKPDLSHVISQSQRADDLTRQLAGEFAEQFNLRLFPHTWVADIDADAHVVKSQDKQWQYDKLVLATGAAAFVPPIAGRELMLTLNSQQEYRACETQLRDAQRVLIVGGGLIGSELAMDFCRAGKTVTLMDNAASLLASLMPPEVSSRLQHHLTDMGVHLLLKSQLQKLEKTEAGIRATLVSQHSIEVDAVIAATGLRPETALARRAGVAVNRGVCVDSYLQTSHPDIYAIGDCAEINGQVLPFLQPIQLSAMYLAKNLLGGNAPLKLPAMLVKVKTPELPLHLAGETQRSDLSWQITAESDGMIAKGMSGEGQLRAFVVSEDRMKEAFALLKTLSV.

This sequence belongs to the FAD-dependent oxidoreductase family. FAD is required as a cofactor.

The protein resides in the cytoplasm. It catalyses the reaction 2 reduced [nitric oxide reductase rubredoxin domain] + NAD(+) + H(+) = 2 oxidized [nitric oxide reductase rubredoxin domain] + NADH. Its pathway is nitrogen metabolism; nitric oxide reduction. In terms of biological role, one of at least two accessory proteins for anaerobic nitric oxide (NO) reductase. Reduces the rubredoxin moiety of NO reductase. In Salmonella enteritidis PT4 (strain P125109), this protein is Nitric oxide reductase FlRd-NAD(+) reductase.